The chain runs to 212 residues: Orotate phosphoribosyltransferase (212 aa).

Residues arginine 97, lysine 101, histidine 103, and 123 to 131 (EDLISTGGS) contribute to the 5-phospho-alpha-D-ribose 1-diphosphate site. An orotate-binding site is contributed by serine 127.

This sequence belongs to the purine/pyrimidine phosphoribosyltransferase family. PyrE subfamily. Homodimer. The cofactor is Mg(2+).

The enzyme catalyses orotidine 5'-phosphate + diphosphate = orotate + 5-phospho-alpha-D-ribose 1-diphosphate. Its pathway is pyrimidine metabolism; UMP biosynthesis via de novo pathway; UMP from orotate: step 1/2. Functionally, catalyzes the transfer of a ribosyl phosphate group from 5-phosphoribose 1-diphosphate to orotate, leading to the formation of orotidine monophosphate (OMP). The chain is Orotate phosphoribosyltransferase from Phocaeicola vulgatus (strain ATCC 8482 / DSM 1447 / JCM 5826 / CCUG 4940 / NBRC 14291 / NCTC 11154) (Bacteroides vulgatus).